Here is a 177-residue protein sequence, read N- to C-terminus: NAD(P)H-quinone oxidoreductase subunit 6, chloroplastic (177 aa).

5 helical membrane-spanning segments follow: residues 10 to 30, 32 to 52, 61 to 81, 92 to 112, and 152 to 172; these read ILLV…VLLT, PIYS…FYIP, AQLL…VMFM, FWTI…FSLI, and FYLP…GAIA.

Belongs to the complex I subunit 6 family. In terms of assembly, NDH is composed of at least 16 different subunits, 5 of which are encoded in the nucleus.

It localises to the plastid. Its subcellular location is the chloroplast thylakoid membrane. The enzyme catalyses a plastoquinone + NADH + (n+1) H(+)(in) = a plastoquinol + NAD(+) + n H(+)(out). It carries out the reaction a plastoquinone + NADPH + (n+1) H(+)(in) = a plastoquinol + NADP(+) + n H(+)(out). Its function is as follows. NDH shuttles electrons from NAD(P)H:plastoquinone, via FMN and iron-sulfur (Fe-S) centers, to quinones in the photosynthetic chain and possibly in a chloroplast respiratory chain. The immediate electron acceptor for the enzyme in this species is believed to be plastoquinone. Couples the redox reaction to proton translocation, and thus conserves the redox energy in a proton gradient. In Nuphar advena (Common spatterdock), this protein is NAD(P)H-quinone oxidoreductase subunit 6, chloroplastic (ndhG).